Consider the following 468-residue polypeptide: Glutamate--tRNA ligase (468 aa).

The short motif at 11-21 (PSPTGFIHLGN) is the 'HIGH' region element. The 'KMSKS' region motif lies at 243–247 (KMSKR). Residue lysine 246 participates in ATP binding.

Belongs to the class-I aminoacyl-tRNA synthetase family. Glutamate--tRNA ligase type 1 subfamily. Monomer.

The protein resides in the cytoplasm. The enzyme catalyses tRNA(Glu) + L-glutamate + ATP = L-glutamyl-tRNA(Glu) + AMP + diphosphate. Catalyzes the attachment of glutamate to tRNA(Glu) in a two-step reaction: glutamate is first activated by ATP to form Glu-AMP and then transferred to the acceptor end of tRNA(Glu). The protein is Glutamate--tRNA ligase of Cupriavidus pinatubonensis (strain JMP 134 / LMG 1197) (Cupriavidus necator (strain JMP 134)).